Consider the following 272-residue polypeptide: Magnetosome protein MamQ (272 aa).

Residues 1–46 (MAVSDADASSVDKVESITLQRVKQSEELLAQLYVVEESPRRMGRGP) are Cytoplasmic-facing. The helical transmembrane segment at 47–67 (VQLMLAISVLSLVAFITTLLM) threads the bilayer. The Lumenal portion of the chain corresponds to 68–272 (RYNAFVTMYE…PLTHSQESKN (205 aa)).

It belongs to the LemA family.

The protein resides in the magnetosome membrane. The protein localises to the cell inner membrane. In terms of biological role, essential for magnetosome formation. Not essential for formation of magnetosome membrane vesicles. One of 7 genes (mamLQBIEMO) able to induce magnetosome membrane biogenesis; coexpression of mamLQRBIEMO in a deletion of the 17 gene mamAB operon restores magnetosome vesicle formation but not magnetite biosynthesis. In Magnetospirillum gryphiswaldense (strain DSM 6361 / JCM 21280 / NBRC 15271 / MSR-1), this protein is Magnetosome protein MamQ.